The primary structure comprises 324 residues: COP9 signalosome complex subunit 6 (324 aa).

The region spanning 38-171 is the MPN domain; sequence VALHPLVILN…VSVFESVIDI (134 aa).

Belongs to the peptidase M67A family. CSN6 subfamily. In terms of assembly, component of the CSN complex, composed of COPS1/GPS1, COPS2, COPS3, COPS4, COPS5, COPS6, COPS7 (COPS7A or COPS7B), COPS8 and COPS9. In the complex, it probably interacts directly with COPS2, COPS4, COPS5, COPS7 (COPS7A or COPS7B) and COPS9. Interacts with the translation initiation factor EIF3S6. Interacts weakly with RBX1. Directly interacts with COP1 and 14-3-3 protein sigma/SFN. Interacts with ERCC6.

The protein resides in the cytoplasm. The protein localises to the nucleus. Functionally, component of the COP9 signalosome complex (CSN), a complex involved in various cellular and developmental processes. The CSN complex is an essential regulator of the ubiquitin (Ubl) conjugation pathway by mediating the deneddylation of the cullin subunits of SCF-type E3 ligase complexes, leading to decrease the Ubl ligase activity of SCF-type complexes such as SCF, CSA or DDB2. The complex is also involved in phosphorylation of p53/TP53, c-jun/JUN, IkappaBalpha/NFKBIA, ITPK1 and IRF8, possibly via its association with CK2 and PKD kinases. CSN-dependent phosphorylation of TP53 and JUN promotes and protects degradation by the Ubl system, respectively. Has some glucocorticoid receptor-responsive activity. Stabilizes COP1 through reducing COP1 auto-ubiquitination and decelerating COP1 turnover rate, hence regulates the ubiquitination of COP1 targets, including SFN. This chain is COP9 signalosome complex subunit 6 (COPS6), found in Bos taurus (Bovine).